We begin with the raw amino-acid sequence, 177 residues long: Putative acetyltransferase FG08082 (177 aa).

In terms of domain architecture, N-acetyltransferase spans 81–174 (EEWEQVGLVR…VSIAMVEGPG (94 aa)).

This sequence belongs to the acetyltransferase family.

It participates in mycotoxin biosynthesis. Its function is as follows. Putative acetyltransferase; part of the gene cluster that mediates the biosynthesis of butenolide, a mycotoxin that shows antibiotic activity but does not seem to play a major role in the spread of head blight in wheat. Butenolide is derived from glutamic acid via a 4-acetamido-2-butenoic acid intermediate. The predicted function of the NADH:flavin oxidoreductase FG08077, the cytochrome P450 monooxygenase FG08079, the decarboxylase FG08083, and the putative acetyltransferase FG08082 are consistent with this pathway, however, the respective activities of the butelonide biosynthesis cluster enzymes have still to be experimentally determined. The protein is Putative acetyltransferase FG08082 of Gibberella zeae (strain ATCC MYA-4620 / CBS 123657 / FGSC 9075 / NRRL 31084 / PH-1) (Wheat head blight fungus).